The sequence spans 238 residues: Fibroblast growth factor-binding protein 1 (238 aa).

The first 20 residues, 1–20 (MRIHGLILLSFLLLAAQVLS), serve as a signal peptide directing secretion. The disordered stretch occupies residues 25–61 (KTAKNVPDSTTEEDMSPSLGKARNKQRSRTSKSMTHG). 3 disulfides stabilise this stretch: cysteine 71/cysteine 88, cysteine 97/cysteine 130, and cysteine 106/cysteine 142. The O-linked (GalNAc...) serine glycan is linked to serine 164. The tract at residues 197–238 (KDSECLEDPDVLTQRKTALEFCGESWSSFCTFFLNMLQATSC) is sufficient for interaction with FGF2 and FGF2-induced effects. 2 cysteine pairs are disulfide-bonded: cysteine 201–cysteine 238 and cysteine 218–cysteine 226.

Belongs to the fibroblast growth factor-binding protein family. In terms of assembly, found in a complex with FGFBP1, FGF1 and FGF2. Interacts with FGF1, FGF2, FGF7, FGF10, FGF22 and HSPG2. As to expression, expressed in gut, eye, thymus, skin, lung, tongue, Purkinje cells and cerebral chorioid plexus (at protein level).

It is found in the secreted. The protein resides in the extracellular space. Its subcellular location is the cell membrane. Acts as a carrier protein that release fibroblast-binding factors (FGFs) from the extracellular matrix (EM) storage and thus enhance the mitogenic activity of FGFs. Enhances FGF2 signaling during tissue repair, angiogenesis and in tumor growth. The chain is Fibroblast growth factor-binding protein 1 (Fgfbp1) from Rattus norvegicus (Rat).